The sequence spans 352 residues: 4-hydroxy-3-methylbut-2-en-1-yl diphosphate synthase (flavodoxin) (352 aa).

4 residues coordinate [4Fe-4S] cluster: Cys-262, Cys-265, Cys-297, and Glu-304.

It belongs to the IspG family. The cofactor is [4Fe-4S] cluster.

It carries out the reaction (2E)-4-hydroxy-3-methylbut-2-enyl diphosphate + oxidized [flavodoxin] + H2O + 2 H(+) = 2-C-methyl-D-erythritol 2,4-cyclic diphosphate + reduced [flavodoxin]. Its pathway is isoprenoid biosynthesis; isopentenyl diphosphate biosynthesis via DXP pathway; isopentenyl diphosphate from 1-deoxy-D-xylulose 5-phosphate: step 5/6. Functionally, converts 2C-methyl-D-erythritol 2,4-cyclodiphosphate (ME-2,4cPP) into 1-hydroxy-2-methyl-2-(E)-butenyl 4-diphosphate. This chain is 4-hydroxy-3-methylbut-2-en-1-yl diphosphate synthase (flavodoxin), found in Campylobacter concisus (strain 13826).